The sequence spans 510 residues: Facilitated glucose transporter protein 1 (510 aa).

The interval 1–29 (MSEKSRSDTSATASLSDSSKSPSSYSTPG) is disordered. Topologically, residues 1 to 46 (MSEKSRSDTSATASLSDSSKSPSSYSTPGTTTQKIIFPDGKLTKCL) are cytoplasmic. Residues 8 to 29 (DTSATASLSDSSKSPSSYSTPG) are compositionally biased toward low complexity. The chain crosses the membrane as a helical span at residues 47–67 (AFSAFVITLASFQFGYHIGCV). Residues 68-100 (NAPGGLITEWIIGSHKDLFDKELSRENADLAWS) are Extracellular-facing. Residues 101–121 (VAVSVFAVGGMIGGLSSGWLA) form a helical membrane-spanning segment. Residues 122–127 (DKVGRR) are Cytoplasmic-facing. A helical membrane pass occupies residues 128–146 (GALFYNNLLALAAAALMGL). At 147 to 160 (AKSVGAYPMVILGR) the chain is on the extracellular side. The helical transmembrane segment at 161-181 (LIIGLNCGFSSALVPMFLTEI) threads the bilayer. Over 182-195 (SPNNLRGMLGSLHQ) the chain is Cytoplasmic. Residue Gln195 participates in D-glucose binding. A helical transmembrane segment spans residues 196–216 (LLVTIAILVSQIFGLPHLLGT). At 217 to 219 (GDR) the chain is on the extracellular side. The helical transmembrane segment at 220–240 (WPLIFAFTVVPAVLQLALLML) threads the bilayer. The Cytoplasmic portion of the chain corresponds to 241-299 (CPESPKYTMAVRGQRNEAESALKKLRDTEDVSTEIEAMQEEATAAGVQEKPKMGDMFKG). The chain crosses the membrane as a helical span at residues 300–320 (ALLWPMSIAIMMMLAQQLSGI). Residues 315 to 316 (QQ), Asn321, and Asn352 each bind D-glucose. The Extracellular portion of the chain corresponds to 321-341 (NVAMFYSTVIFRGAGLTGNEP). A helical transmembrane segment spans residues 342–362 (FYATIGMGAVNVIMTLISVWL). At 363 to 373 (VDHPKFGRRSL) the chain is on the cytoplasmic side. Residues 374–394 (LLAGLTGMFVSTLLLVGALTI) traverse the membrane as a helical segment. Residues 395–409 (QNSGGDKWASYSAIG) are Extracellular-facing. Residues 410–430 (FVLLFVISFATGPGAIPWFFV) traverse the membrane as a helical segment. Trp427 provides a ligand contact to D-glucose. At 431–445 (SEIFDSSARGNANSI) the chain is on the cytoplasmic side. Residues 446 to 464 (AVMVNWAANLLVGLTFLPI) traverse the membrane as a helical segment. Residues 465 to 470 (NNLMQQ) lie on the Extracellular side of the membrane. The chain crosses the membrane as a helical span at residues 471–491 (YSFFIFSGFLAFFIFYTWKFV). The Cytoplasmic portion of the chain corresponds to 492 to 510 (PETKGKSIEQIQAEFEKRK).

The protein belongs to the major facilitator superfamily. Sugar transporter (TC 2.A.1.1) family. Glucose transporter subfamily. Isoform a is expressed in pharyngeal muscle and intestinal cells in both embryos and adults (at protein level).

Its subcellular location is the cell membrane. It is found in the basolateral cell membrane. Functionally, facilitative glucose transporter that plays a role in glucose metabolism and regulation of longevity. May also play a role in lipid metabolism. Glucose transport activity of isoform a is competitively inhibited by mannose, galactose and fructose, suggesting ability to transport also other hexose sugars. In Caenorhabditis elegans, this protein is Facilitated glucose transporter protein 1.